We begin with the raw amino-acid sequence, 104 residues long: Iron-sulfur cluster assembly protein CyaY (104 aa).

Belongs to the frataxin family.

Its function is as follows. Involved in iron-sulfur (Fe-S) cluster assembly. May act as a regulator of Fe-S biogenesis. The protein is Iron-sulfur cluster assembly protein CyaY of Aliivibrio salmonicida (strain LFI1238) (Vibrio salmonicida (strain LFI1238)).